The primary structure comprises 263 residues: Achaete-scute homolog 2 (263 aa).

Disordered stretches follow at residues 104 to 126 and 194 to 248; these read RRRR…RNER and PPSD…ELSP. 3 stretches are compositionally biased toward low complexity: residues 110-121, 202-220, and 230-247; these read ATEASSSSAAVA, PSAS…SPSP, and SPRS…GELS. The bHLH domain occupies 118 to 170; that stretch reads AAVARRNERERNRVKLVNLGFQALRQHVPHGGANKKLSKVETLRSAVEYIRAL.

Efficient DNA binding requires dimerization with another basic helix-loop-helix (bHLH) protein. Forms heterodimers with bHLH transcription factor TCF3. May not heterodimerise with bHLH protein HAND1. In terms of tissue distribution, expressed in follicular T-helper (Tfh) cells.

It is found in the nucleus. In terms of biological role, transcription factor. Binds to E-box motifs 5'-CANNTG-3' in the regulatory elements of target genes, probably as a heterodimer with another basic helix-loop-helix (bHLH) protein such as the transcription factor TCF3. May bind both open and closed chromatin, acting as a pioneer transcription factor to allow other factors to bind and activate lineage-specific genes. Required during post-implantation development for the generation of some differentiated trophoblast cell types. Transcriptional activity of ASCL2 may be antagonised in a subset of trophoblast cells by bHLH transcription factor HAND1, perhaps by competing for dimerization with other bHLH proteins. Involved in differentiation and function of follicular T-helper (Tfh) cells, thereby playing a role in germinal center responses; probably modulates expression of genes involved in Tfh cell function, such as BCL6. May also act as a suppressor of Th1-, Th2- and Th17-cell differentiation. Induces the formation of stem cells in intestinal crypts in vitro, synergistically activating transcription of target genes, such as SOX9, together with TCF4/beta-catenin. May form a bistable transcriptional switch, controlling expression of its own gene together with Wnt/R-spondin signaling, and thereby maintaining stem cell characteristics. Modulates expression of target genes, including perhaps down-regulating EGR1/Krox24 and chemokine CXCL10/Mob-1 and up-regulating CXCR4 and CDKN1C/p57kip2, in Schwann cells. May play a role in reducing proliferation of Schwann cells, perhaps acting via modulation of expression of CDKN1C. May be dispensable for blastocyst formation and later embryonic function. May be involved in the determination of neuronal precursors. The chain is Achaete-scute homolog 2 (Ascl2) from Mus musculus (Mouse).